The following is a 197-amino-acid chain: Putative methyltransferase Mtx subunit A (197 aa).

The protein belongs to the MtrA family. In terms of assembly, may be part of a complex composed of 3 subunits; MtxA, MtxH and MtxX.

This is Putative methyltransferase Mtx subunit A (mtxA) from Methanosarcina acetivorans (strain ATCC 35395 / DSM 2834 / JCM 12185 / C2A).